The primary structure comprises 465 residues: Mothers against decapentaplegic homolog 5 (465 aa).

An N-acetylthreonine modification is found at T2. The MH1 domain maps to 13–137 (PAVKRLLGWK…YKRVESPVLP (125 aa)). Positions 65, 110, 122, and 127 each coordinate Zn(2+). Positions 163–249 (NEPHMPQNAT…PMDTSNNMIP (87 aa)) are disordered. A compositionally biased stretch (polar residues) spans 169 to 182 (QNATFPDSFHQPNN). A compositionally biased stretch (pro residues) spans 186 to 197 (PLSPNSPYPPSP). The segment covering 198-214 (ASSTYPNSPASSGPGSP) has biased composition (low complexity). Residues 234-249 (GQDNSQPMDTSNNMIP) are compositionally biased toward polar residues. The MH2 domain occupies 271–465 (WCSIVYYELN…SPLNPISSVS (195 aa)). 2 positions are modified to phosphoserine: S463 and S465.

This sequence belongs to the dwarfin/SMAD family. Homodimer. Forms trimers with the co-SMAD SMAD4. Interacts with PEBP2-alpha subunit and SMURF1. Interacts with SUV39H1 and SUV39H2. Interacts (via MH2 domain) with LEMD3. Interacts with WWP1. Interacts with TMEM119. Interacts with ZNF8. Interacts with RANBP3L. Interacts with HK1. Interacts with HGS; this interaction attenuates BMP signaling. In terms of processing, phosphorylated on serine by BMP (bone morphogenetic proteins) type 1 receptor kinase. Post-translationally, ubiquitin-mediated proteolysis by SMAD-specific E3 ubiquitin ligase SMURF1. As to expression, ubiquitous.

The protein localises to the cytoplasm. It is found in the nucleus. It localises to the mitochondrion. Transcriptional regulator that plays a role in various cellular processes including embryonic development, cell differentiation, angiogenesis and tissue homeostasis. Upon BMP ligand binding to their receptors at the cell surface, is phosphorylated by activated type I BMP receptors (BMPRIs) and associates with SMAD4 to form a heteromeric complex which translocates into the nucleus acting as transcription factor. In turn, the hetero-trimeric complex recognizes cis-regulatory elements containing Smad Binding Elements (SBEs) to modulate the outcome of the signaling network. Non-phosphorylated SMAD5 has a cytoplasmic role in energy metabolism regulation by promoting mitochondrial respiration and glycolysis in response to cytoplasmic pH changes. Mechanistically, interacts with hexokinase 1/HK1 and thereby accelerates glycolysis. This chain is Mothers against decapentaplegic homolog 5 (SMAD5), found in Homo sapiens (Human).